Here is a 995-residue protein sequence, read N- to C-terminus: MGMRPPSGLPSLSRRSRVLLVAAVVLAALLLLGPRFTDAYTNWLWFGEVGFREVFLTVVVTRIILFAAVALFVGATVWLALLLAYRTRPVFVPMAGPNDPIARYRTTVMSRLKTFGIGIPVLLGLLAGLVAQSNWVTVQLFLNGGDFGEQDPQFHLDVGFYAFDLPFYRMVLNWMFVAVVIAFFASLVTHYIFGGLRLSGREGTLTRPARIQLAVIAGLFVLLKAVAYWFDRYDLLSSSRKEPTFYGGSFTDINAVLPAKLILLAIAVICAVAFFAGVVLRDLRVPAMAAALLVLSSVLVGAVYPLVVEQFSVRPNAADKESEYIERNIAATRQAFGITSDKIEYKDYKGESDKNPLDVPVDAATIGNARLLDPNILSPTFTQLRQLKNFYGFPESLDIDRYNLDGNLQDYIVAARELSPAALTGNQTDWINKHTVYTHGNGFVAAPANRVNKPQSEDVAAGGSSDSGYPIFLVSDLFTPKDRQRIPVEQPRIYFGELISQSDPDYAIVGGAEGQAPREYDSDTAQYTYTGKGGVPIGNWFNRLAFAAKYAERNILFSSAIGDDSKIIFNRSPRERVQKVAPWLTTDGNAYPAVVDERIVWIVDAYTTLDNYPYAQKTSLEGAVEDSIDKKTGRLLPRKEVSYIRNSVKATVDAYDGTVTLYEVDSTDPVLKAWRGVFPGAVKPESEISPELRAHFRYPEDLFKVQREMLTKYHVDNPREFFTNNAFWSVPSDPTIEGGSFNQPPYYVLLGDPKTNRPVFNLTSAMVGYNRQFLSAYISVRSDPDDYGKFTILRLPTDTQTQGPQQTQNTMTTAPQVSQEKTLLSNSNKIRYGNLLTLPIADGGILYVEPFYNERNTGPNTATFPQLLRVLVSYRDQAGSVKVGYASTLAEALNQVLPGAGSLATPFGGDPATRPQPGTAPPVVDSTQPPADGGTPQPQTTPPPTGSAAKDAAAAELDRKIEAVRNAMRSGNFQDFGKALEELEAAVKTYQDAGR.

Transmembrane regions (helical) follow at residues 18 to 38 (VLLVAAVVLAALLLLGPRFTD), 63 to 83 (IILFAAVALFVGATVWLALLL), 115 to 135 (FGIGIPVLLGLLAGLVAQSNW), 176 to 196 (FVAVVIAFFASLVTHYIFGGL), 211 to 231 (IQLAVIAGLFVLLKAVAYWFD), 260 to 280 (KLILLAIAVICAVAFFAGVVL), and 288 to 308 (MAAALLVLSSVLVGAVYPLVV). Residues 904-957 (ATPFGGDPATRPQPGTAPPVVDSTQPPADGGTPQPQTTPPPTGSAAKDAAAAEL) are disordered. 2 stretches are compositionally biased toward low complexity: residues 927–938 (TQPPADGGTPQP) and 946–955 (GSAAKDAAAA).

Belongs to the UPF0182 family.

The protein localises to the cell membrane. The chain is UPF0182 protein NFA_45260 from Nocardia farcinica (strain IFM 10152).